The following is a 138-amino-acid chain: AKVSRKPREPRTAVTQSTRRIKRKKTLSKPRSRGGVKAPKTTMKIKRALRRNLRRKIQTSAGQPKKAKKARKHFVSYYVLKKSGQNKKTNQNKRQNQNKRQNQNKRRGQPVPEQEIMEKPTTSCKWCSQGVTRRGRRY.

Basic and acidic residues predominate over residues 1–11; that stretch reads AKVSRKPREPR. Residues 1–138 are disordered; that stretch reads AKVSRKPREP…QGVTRRGRRY (138 aa). Residue Ser4 is modified to Phosphoserine; by PKC. A Nuclear localization signal motif is present at residues 5–23; it reads RKPREPRTAVTQSTRRIKR. 3 stretches are compositionally biased toward basic residues: residues 19–34, 43–57, and 65–74; these read RRIK…RSRG, MKIK…RRKI, and KKAKKARKHF. Thr26 carries the post-translational modification Phosphothreonine; by PKA. The Nuclear localization signal signature appears at 54–72; that stretch reads RRKIQTSAGQPKKAKKARK. Over residues 86–101 the composition is skewed to low complexity; that stretch reads NKKTNQNKRQNQNKRQ. The segment covering 120–131 has biased composition (polar residues); the sequence is PTTSCKWCSQGV.

It is found in the nucleus. The protein resides in the chromosome. Involved in nuclear basic protein transition: histones are replaced by spermatid specific proteins which are themselves replaced by protamines in late spermatids. The protein is Spermatid nuclear transition protein 4 (TNP4) of Sus scrofa (Pig).